The primary structure comprises 385 residues: 1-deoxy-D-xylulose 5-phosphate reductoisomerase (385 aa).

The NADPH site is built by threonine 10, glycine 11, serine 12, isoleucine 13, lysine 37, and asparagine 124. 1-deoxy-D-xylulose 5-phosphate is bound at residue lysine 125. Glutamate 126 lines the NADPH pocket. A Mn(2+)-binding site is contributed by aspartate 150. 4 residues coordinate 1-deoxy-D-xylulose 5-phosphate: serine 151, glutamate 152, serine 176, and histidine 199. Residue glutamate 152 participates in Mn(2+) binding. Glycine 205 is an NADPH binding site. The 1-deoxy-D-xylulose 5-phosphate site is built by serine 212, asparagine 217, lysine 218, and glutamate 221. Position 221 (glutamate 221) interacts with Mn(2+).

It belongs to the DXR family. Mg(2+) is required as a cofactor. The cofactor is Mn(2+).

It carries out the reaction 2-C-methyl-D-erythritol 4-phosphate + NADP(+) = 1-deoxy-D-xylulose 5-phosphate + NADPH + H(+). The protein operates within isoprenoid biosynthesis; isopentenyl diphosphate biosynthesis via DXP pathway; isopentenyl diphosphate from 1-deoxy-D-xylulose 5-phosphate: step 1/6. Its function is as follows. Catalyzes the NADPH-dependent rearrangement and reduction of 1-deoxy-D-xylulose-5-phosphate (DXP) to 2-C-methyl-D-erythritol 4-phosphate (MEP). This is 1-deoxy-D-xylulose 5-phosphate reductoisomerase from Clostridium botulinum (strain 657 / Type Ba4).